The chain runs to 261 residues: Cytochrome c oxidase subunit 3 (261 aa).

At 1–15 (MTHQTHAYHMVNPSP) the chain is on the mitochondrial matrix side. A helical membrane pass occupies residues 16–34 (WPLTGALSALLMTSGLIMW). Residues 35–40 (FHFNST) lie on the Mitochondrial intermembrane side of the membrane. The chain crosses the membrane as a helical span at residues 41–66 (TLLMLGLTTNMLTMYQWWRDVIREST). Topologically, residues 67 to 72 (FQGHHT) are mitochondrial matrix. A helical membrane pass occupies residues 73 to 105 (PNVQKGLRYGMILFIISEVLFFTGFFWAFYHSS). Residues 106–128 (LAPTPELGGCWPPTGINPLNPLE) lie on the Mitochondrial intermembrane side of the membrane. The chain crosses the membrane as a helical span at residues 129–152 (VPLLNTSVLLASGVSITWAHHSLM). Residues 153 to 155 (EGN) lie on the Mitochondrial matrix side of the membrane. The helical transmembrane segment at 156 to 183 (RNHMLQALFITIALGVYFTLLQASEYYE) threads the bilayer. Residues 184 to 190 (APFTISD) lie on the Mitochondrial intermembrane side of the membrane. The chain crosses the membrane as a helical span at residues 191–223 (GVYGSTFFVATGFHGLHVIIGSTFLIVCFFRQL). The Mitochondrial matrix segment spans residues 224-232 (KFHFTSNHH). The helical transmembrane segment at 233-256 (FGFEAAAWYWHFVDVVWLFLYVSI) threads the bilayer. Residues 257–261 (YWWGS) lie on the Mitochondrial intermembrane side of the membrane.

This sequence belongs to the cytochrome c oxidase subunit 3 family. As to quaternary structure, component of the cytochrome c oxidase (complex IV, CIV), a multisubunit enzyme composed of 14 subunits. The complex is composed of a catalytic core of 3 subunits MT-CO1, MT-CO2 and MT-CO3, encoded in the mitochondrial DNA, and 11 supernumerary subunits COX4I, COX5A, COX5B, COX6A, COX6B, COX6C, COX7A, COX7B, COX7C, COX8 and NDUFA4, which are encoded in the nuclear genome. The complex exists as a monomer or a dimer and forms supercomplexes (SCs) in the inner mitochondrial membrane with NADH-ubiquinone oxidoreductase (complex I, CI) and ubiquinol-cytochrome c oxidoreductase (cytochrome b-c1 complex, complex III, CIII), resulting in different assemblies (supercomplex SCI(1)III(2)IV(1) and megacomplex MCI(2)III(2)IV(2)).

Its subcellular location is the mitochondrion inner membrane. The enzyme catalyses 4 Fe(II)-[cytochrome c] + O2 + 8 H(+)(in) = 4 Fe(III)-[cytochrome c] + 2 H2O + 4 H(+)(out). In terms of biological role, component of the cytochrome c oxidase, the last enzyme in the mitochondrial electron transport chain which drives oxidative phosphorylation. The respiratory chain contains 3 multisubunit complexes succinate dehydrogenase (complex II, CII), ubiquinol-cytochrome c oxidoreductase (cytochrome b-c1 complex, complex III, CIII) and cytochrome c oxidase (complex IV, CIV), that cooperate to transfer electrons derived from NADH and succinate to molecular oxygen, creating an electrochemical gradient over the inner membrane that drives transmembrane transport and the ATP synthase. Cytochrome c oxidase is the component of the respiratory chain that catalyzes the reduction of oxygen to water. Electrons originating from reduced cytochrome c in the intermembrane space (IMS) are transferred via the dinuclear copper A center (CU(A)) of subunit 2 and heme A of subunit 1 to the active site in subunit 1, a binuclear center (BNC) formed by heme A3 and copper B (CU(B)). The BNC reduces molecular oxygen to 2 water molecules using 4 electrons from cytochrome c in the IMS and 4 protons from the mitochondrial matrix. The polypeptide is Cytochrome c oxidase subunit 3 (MT-CO3) (Gazella subgutturosa (Goitred gazelle)).